The sequence spans 147 residues: Large ribosomal subunit protein uL13 (147 aa).

Belongs to the universal ribosomal protein uL13 family. Part of the 50S ribosomal subunit.

Functionally, this protein is one of the early assembly proteins of the 50S ribosomal subunit, although it is not seen to bind rRNA by itself. It is important during the early stages of 50S assembly. The sequence is that of Large ribosomal subunit protein uL13 from Lactobacillus delbrueckii subsp. bulgaricus (strain ATCC 11842 / DSM 20081 / BCRC 10696 / JCM 1002 / NBRC 13953 / NCIMB 11778 / NCTC 12712 / WDCM 00102 / Lb 14).